The sequence spans 407 residues: Nicotinate phosphoribosyltransferase (407 aa).

Residue His-224 is modified to Phosphohistidine; by autocatalysis.

This sequence belongs to the NAPRTase family. In terms of processing, transiently phosphorylated on a His residue during the reaction cycle. Phosphorylation strongly increases the affinity for substrates and increases the rate of nicotinate D-ribonucleotide production. Dephosphorylation regenerates the low-affinity form of the enzyme, leading to product release.

It carries out the reaction nicotinate + 5-phospho-alpha-D-ribose 1-diphosphate + ATP + H2O = nicotinate beta-D-ribonucleotide + ADP + phosphate + diphosphate. It participates in cofactor biosynthesis; NAD(+) biosynthesis; nicotinate D-ribonucleotide from nicotinate: step 1/1. Catalyzes the synthesis of beta-nicotinate D-ribonucleotide from nicotinate and 5-phospho-D-ribose 1-phosphate at the expense of ATP. The chain is Nicotinate phosphoribosyltransferase from Pseudomonas savastanoi pv. phaseolicola (strain 1448A / Race 6) (Pseudomonas syringae pv. phaseolicola (strain 1448A / Race 6)).